A 139-amino-acid chain; its full sequence is 6,7-dimethyl-8-ribityllumazine synthase (139 aa).

Residues Phe-13, 45–47 (VFD), and 69–71 (AVI) each bind 5-amino-6-(D-ribitylamino)uracil. 74–75 (AT) lines the (2S)-2-hydroxy-3-oxobutyl phosphate pocket. Residue His-77 is the Proton donor of the active site. Residue Leu-102 coordinates 5-amino-6-(D-ribitylamino)uracil. Arg-117 contributes to the (2S)-2-hydroxy-3-oxobutyl phosphate binding site.

It belongs to the DMRL synthase family.

It catalyses the reaction (2S)-2-hydroxy-3-oxobutyl phosphate + 5-amino-6-(D-ribitylamino)uracil = 6,7-dimethyl-8-(1-D-ribityl)lumazine + phosphate + 2 H2O + H(+). Its pathway is cofactor biosynthesis; riboflavin biosynthesis; riboflavin from 2-hydroxy-3-oxobutyl phosphate and 5-amino-6-(D-ribitylamino)uracil: step 1/2. Catalyzes the formation of 6,7-dimethyl-8-ribityllumazine by condensation of 5-amino-6-(D-ribitylamino)uracil with 3,4-dihydroxy-2-butanone 4-phosphate. This is the penultimate step in the biosynthesis of riboflavin. This Methanothermobacter thermautotrophicus (strain ATCC 29096 / DSM 1053 / JCM 10044 / NBRC 100330 / Delta H) (Methanobacterium thermoautotrophicum) protein is 6,7-dimethyl-8-ribityllumazine synthase.